Here is a 244-residue protein sequence, read N- to C-terminus: PF03932 family protein CutC (244 aa).

Belongs to the CutC family.

It is found in the cytoplasm. This chain is PF03932 family protein CutC, found in Pasteurella multocida (strain Pm70).